The sequence spans 508 residues: Maturase K (508 aa).

It belongs to the intron maturase 2 family. MatK subfamily.

The protein resides in the plastid. The protein localises to the chloroplast. In terms of biological role, usually encoded in the trnK tRNA gene intron. Probably assists in splicing its own and other chloroplast group II introns. The polypeptide is Maturase K (Ranunculus lingua (Greater spearwort)).